We begin with the raw amino-acid sequence, 449 residues long: Xylose isomerase (449 aa).

Active-site residues include H103 and D106. Mg(2+) is bound by residues E234, E270, H273, D298, D309, D311, and D342.

The protein belongs to the xylose isomerase family. In terms of assembly, homotetramer. The cofactor is Mg(2+).

Its subcellular location is the cytoplasm. The enzyme catalyses alpha-D-xylose = alpha-D-xylulofuranose. The chain is Xylose isomerase from Levilactobacillus brevis (Lactobacillus brevis).